Consider the following 333-residue polypeptide: Gamma-D-glutamyl-L-lysine dipeptidyl-peptidase (333 aa).

Residues 1–23 (MKKVGTAFLTTLFIFSSFTSAHA) form the signal peptide. Substrate-binding positions include Glu83, Tyr118, 237 to 239 (DCS), and 256 to 257 (DS). The NlpC/P60 domain maps to 208-332 (TPAADDLINT…EEYAGARRYL (125 aa)). Residue Cys238 is the Nucleophile of the active site. His291 functions as the Proton acceptor in the catalytic mechanism. Residue His303 is part of the active site.

This sequence belongs to the peptidase C40 family. Monomer in solution.

It catalyses the reaction The enzyme releases L-Ala-gamma-D-Glu dipeptides from cell wall peptides via cleavage of an L-Ala-gamma-D-Glu-|-L-Lys bond.. The protein operates within cell wall degradation; peptidoglycan degradation. Specifically hydrolyzes gamma-D-glutamyl-L-lysine bonds in murein peptides, releasing L-Ala-D-Glu. This is Gamma-D-glutamyl-L-lysine dipeptidyl-peptidase from Bacillus cereus (strain ATCC 10987 / NRS 248).